The sequence spans 993 residues: ATP-dependent DNA helicase MPH1 (993 aa).

Residues 94-261 form the Helicase ATP-binding domain; that stretch reads IVHKSLFQNT…EVVNNLDISK (168 aa). 107-114 contacts ATP; sequence IPTGMGKT. A DEAH box motif is present at residues 209–212; sequence DEAH. The 149-residue stretch at 507 to 655 folds into the Helicase C-terminal domain; the sequence is KVERLHRQEQ…CIDYKKSDRI (149 aa). Positions 530–551 are disordered; it reads NDKLERSARRTGSSEEAQISGM. Positions 539–551 are enriched in polar residues; it reads RTGSSEEAQISGM. An FKH1-binding region region spans residues 751-810; it reads LVTSNENPSKKRKIFKALDNLENDSTEEASSSLETEDEEVSDDNNVFIAEGQNGCQKDLE. Threonine 776 and threonine 785 each carry phosphothreonine.

The protein belongs to the DEAD box helicase family. DEAH subfamily. FANCM sub-subfamily. Interacts with the MHF histone-fold complex composed of MHF1 and MHF2 to form the FANCM-MHF complex. Interacts with FHK1. In terms of processing, phosphorylation at both Thr-776 and Thr-785 is required for the interaction with FKH1.

It is found in the nucleus. It catalyses the reaction ATP + H2O = ADP + phosphate + H(+). ATP-dependent DNA helicase involved in DNA damage repair by homologous recombination and in genome maintenance. Capable of unwinding D-loops. Plays a role in limiting crossover recombinants during mitotic DNA double-strand break (DSB) repair. Prevents crossovers between ectopic sequences by removing substrates for MUS81-MMS4 or RAD1-RAD10 cleavage. Component of a FANCM-MHF complex which promotes gene conversion at blocked replication forks, probably by reversal of the stalled fork. Binds to flap-structured DNA but not to non-flap nicked DNA, and participates in Okazaki fragment processing by stimulating the endonuclease activities of FEN1 and DNA2. Involved in recombination donor preference during mating-type switching via interaction with FKH1. This is ATP-dependent DNA helicase MPH1 from Saccharomyces cerevisiae (strain ATCC 204508 / S288c) (Baker's yeast).